Reading from the N-terminus, the 374-residue chain is 3-dehydroquinate synthase (374 aa).

The protein belongs to the archaeal-type DHQ synthase family.

It carries out the reaction 2-amino-2,3,7-trideoxy-D-lyxo-hept-6-ulosonate + NAD(+) + H2O = 3-dehydroquinate + NH4(+) + NADH + H(+). Functionally, catalyzes the oxidative deamination and cyclization of 2-amino-3,7-dideoxy-D-threo-hept-6-ulosonic acid (ADH) to yield 3-dehydroquinate (DHQ), which is fed into the canonical shikimic pathway of aromatic amino acid biosynthesis. This Methanocella arvoryzae (strain DSM 22066 / NBRC 105507 / MRE50) protein is 3-dehydroquinate synthase.